The chain runs to 429 residues: Serum response factor-binding protein 1 (429 aa).

Alanine 2 bears the N-acetylalanine mark. Coiled coils occupy residues 42–67 (KGTE…AMKE) and 108–146 (LLKK…NHSE). Disordered regions lie at residues 131-157 (AEVE…NGSN) and 176-429 (LAKK…TFDD). Positions 146-157 (ENTLYSNDNGSN) are enriched in polar residues. Residues 183 to 195 (NSKEKIAKMEHGP) show a composition bias toward basic and acidic residues. Lysine 190 is covalently cross-linked (Glycyl lysine isopeptide (Lys-Gly) (interchain with G-Cter in SUMO2)). 5 positions are modified to phosphoserine: serine 203, serine 205, serine 264, serine 279, and serine 281. Residues 249–265 (GGEEFCEEEKEYFDDST) show a composition bias toward acidic residues. The span at 296–341 (KESSCHSSVKEQKPLEKVFLKEDTGETHGDTRNDKIKPSTETRKLE) shows a compositional bias: basic and acidic residues. A Glycyl lysine isopeptide (Lys-Gly) (interchain with G-Cter in SUMO2) cross-link involves residue lysine 316. 3 positions are modified to phosphoserine: serine 349, serine 351, and serine 367. Positions 357–367 (NFKEQAPKTRS) are enriched in basic and acidic residues. Residues 373-383 (NEPQIKNQFNK) show a composition bias toward polar residues.

As to quaternary structure, interacts with SRF. Forms complexes with SRF and SRF cofactors ARID2, MYOCD and NKX2-5. Interacts with the N-terminus of SLC2A4. As to expression, abundantly expressed in heart and skeletal muscle, and at much lower levels in brain and lung.

The protein resides in the cytoplasm. It is found in the perinuclear region. In terms of biological role, may be involved in regulating transcriptional activation of cardiac genes during the aging process. May play a role in biosynthesis and/or processing of SLC2A4 in adipose cells. The sequence is that of Serum response factor-binding protein 1 from Homo sapiens (Human).